Reading from the N-terminus, the 102-residue chain is Fe-S protein maturation auxiliary factor YitW (102 aa).

This sequence belongs to the MIP18 family.

Functionally, involved in the maturation of iron-sulfur (Fe-S) proteins. May function as a Fe-S cluster carrier. In Bacillus subtilis (strain 168), this protein is Fe-S protein maturation auxiliary factor YitW (yitW).